Consider the following 70-residue polypeptide: Large ribosomal subunit protein uL29 (70 aa).

Belongs to the universal ribosomal protein uL29 family.

This Prochlorococcus marinus (strain MIT 9303) protein is Large ribosomal subunit protein uL29.